Reading from the N-terminus, the 192-residue chain is Sarcoplasmic calcium-binding protein 1 (192 aa).

N-acetylalanine is present on Ala1. 4 consecutive EF-hand domains span residues Trp4–Ile39, Ile56–Gly91, Ala100–Phe135, and Ala136–Phe171. Ca(2+) contacts are provided by Asp17, Asp19, Asn21, Asp28, Asp69, Asn71, Asp73, Glu75, Glu80, Asp113, Asn115, Asp117, and Glu124.

SCPs from crayfish, lobster, and shrimp are polymorphic dimers.

Functionally, like parvalbumins, SCPs seem to be more abundant in fast contracting muscles, but no functional relationship can be established from this distribution. This chain is Sarcoplasmic calcium-binding protein 1, found in Astacus leptodactylus (Turkish narrow-clawed crayfish).